The chain runs to 200 residues: Inner membrane-spanning protein YciB (200 aa).

Helical transmembrane passes span 1–21 (MPPL…FFAN), 37–57 (IGAP…IALA), 66–86 (LAIM…LTLW), 103–123 (LFGG…GYVF), 136–156 (KLTL…EIVW), and 167–187 (FKVW…MPLI).

Belongs to the YciB family.

It localises to the cell inner membrane. Plays a role in cell envelope biogenesis, maintenance of cell envelope integrity and membrane homeostasis. In Brucella melitensis biotype 1 (strain ATCC 23456 / CCUG 17765 / NCTC 10094 / 16M), this protein is Inner membrane-spanning protein YciB.